Reading from the N-terminus, the 70-residue chain is Probable ferredoxin TA0517 (70 aa).

2 4Fe-4S ferredoxin-type domains span residues T8–E36 and T37–F66. [4Fe-4S] cluster contacts are provided by C17, C20, C23, C27, C46, C49, C52, and C56.

Requires [4Fe-4S] cluster as cofactor.

Functionally, ferredoxins are iron-sulfur proteins that transfer electrons in a wide variety of metabolic reactions. In Thermoplasma acidophilum (strain ATCC 25905 / DSM 1728 / JCM 9062 / NBRC 15155 / AMRC-C165), this protein is Probable ferredoxin TA0517.